The chain runs to 1486 residues: Chromosome partition protein MukB (1486 aa).

34-41 (GGNGAGKS) is a binding site for ATP. 3 coiled-coil regions span residues 326–418 (LEAD…QYNQ), 444–480 (LETFQAKELEATEKMLSLEQKMSMAQTAHSQFEQAYQ), and 509–603 (RHLA…RAPV). Residues 666–783 (PGGSEDQRLN…EVPLFGRAAR (118 aa)) form a flexible hinge region. Coiled coils occupy residues 835–923 (EAEI…AKLE), 977–1115 (EMLS…TAKA), and 1209–1266 (VEAI…QNVS).

It belongs to the SMC family. MukB subfamily. In terms of assembly, homodimerization via its hinge domain. Binds to DNA via its C-terminal region. Interacts, and probably forms a ternary complex, with MukE and MukF via its C-terminal region. The complex formation is stimulated by calcium or magnesium. Interacts with tubulin-related protein FtsZ.

It localises to the cytoplasm. Its subcellular location is the nucleoid. Its function is as follows. Plays a central role in chromosome condensation, segregation and cell cycle progression. Functions as a homodimer, which is essential for chromosome partition. Involved in negative DNA supercoiling in vivo, and by this means organize and compact chromosomes. May achieve or facilitate chromosome segregation by condensation DNA from both sides of a centrally located replisome during cell division. The sequence is that of Chromosome partition protein MukB from Escherichia coli (strain ATCC 8739 / DSM 1576 / NBRC 3972 / NCIMB 8545 / WDCM 00012 / Crooks).